Reading from the N-terminus, the 1506-residue chain is Gag-Pol polyprotein (1506 aa).

2 CCHC-type zinc fingers span residues 385–402 (QKCY…QCRQ) and 404–421 (IICH…DCRQ). A Peptidase A2 domain is found at 459–530 (KKLLVDTGAD…SPVEVLGRDN (72 aa)). Asp-464 acts as the Protease; shared with dimeric partner in catalysis. The 190-residue stretch at 587 to 776 (EGKVGRAPPH…YPAKWLGFEL (190 aa)) folds into the Reverse transcriptase domain. Residues Asp-652, Asp-727, Asp-728, Asp-980, Glu-1012, Asp-1032, and Asp-1085 each contribute to the Mg(2+) site. Residues 971–1093 (LVPGPTYYTD…IDRYISEIFL (123 aa)) form the RNase H type-1 domain. Residues 1228–1269 (ENIPLAEEEHNKWHQDAVSLHLEFGIPRTAAEDIVQQCDVCQ) form an Integrase-type zinc finger. Residues His-1237, His-1241, Cys-1265, and Cys-1268 each coordinate Zn(2+). The region spanning 1270–1430 (ENKMPSTLRG…SPMDIFIFNK (161 aa)) is the Integrase catalytic domain. Mg(2+)-binding residues include Asp-1291, Asp-1343, and Glu-1379. The segment at residues 1447–1499 (RFCYYRTRKRGHPGEWQGPTQVLWGGDGAIVVKDRGTDRYLVIANKDVKFIPP) is a DNA-binding region (integrase-type).

It belongs to the retroviral Pol polyprotein family. Homotetramer; further associates as a homohexadecamer. Mg(2+) serves as cofactor. Specific enzymatic cleavages by the viral protease yield mature proteins.

It localises to the virion. The enzyme catalyses Endonucleolytic cleavage to 5'-phosphomonoester.. It catalyses the reaction 3'-end directed exonucleolytic cleavage of viral RNA-DNA hybrid.. It carries out the reaction dUTP + H2O = dUMP + diphosphate + H(+). The catalysed reaction is DNA(n) + a 2'-deoxyribonucleoside 5'-triphosphate = DNA(n+1) + diphosphate. Its function is as follows. Mediates, with Gag polyprotein, the essential events in virion assembly, including binding the plasma membrane, making the protein-protein interactions necessary to create spherical particles, recruiting the viral Env proteins, and packaging the genomic RNA via direct interactions with the RNA packaging sequence. Targets the polyprotein to the plasma membrane. Functionally, forms the core that encapsulates the genomic RNA-nucleocapsid complex in the virion. In terms of biological role, encapsulates and protects viral dimeric unspliced genomic RNA (gRNA). Binds these RNAs through its zinc fingers. Acts as a nucleic acid chaperone which is involved in rearrangement of nucleic acid secondary structure during gRNA retrotranscription. Also facilitates template switch leading to recombination. Its function is as follows. The aspartyl protease mediates proteolytic cleavages of Gag and Gag-Pol polyproteins during or shortly after the release of the virion from the plasma membrane. Cleavages take place as an ordered, step-wise cascade to yield mature proteins. This process is called maturation. Displays maximal activity during the budding process just prior to particle release from the cell. RT is a multifunctional enzyme that converts the viral dimeric RNA genome into dsDNA in the cytoplasm, shortly after virus entry into the cell. This enzyme displays a DNA polymerase activity that can copy either DNA or RNA templates, and a ribonuclease H (RNase H) activity that cleaves the RNA strand of RNA-DNA heteroduplexes in a partially processive 3' to 5' endonucleasic mode. Conversion of viral genomic RNA into dsDNA requires many steps. A tRNA-Trp binds to the primer-binding site (PBS) situated at the 5' end of the viral RNA. RT uses the 3' end of the tRNA primer to perfom a short round of RNA-dependent minus-strand DNA synthesis. The reading proceeds through the U5 region and ends after the repeated (R) region which is present at both ends of viral RNA. The portion of the RNA-DNA heteroduplex is digested by the RNase H, resulting in a ssDNA product attached to the tRNA primer. This ssDNA/tRNA hybridizes with the identical R region situated at the 3' end of viral RNA. This template exchange, known as minus-strand DNA strong stop transfer, can be either intra- or intermolecular. RT uses the 3' end of this newly synthesized short ssDNA to perfom the RNA-dependent minus-strand DNA synthesis of the whole template. RNase H digests the RNA template except for a polypurine tract (PPT) situated at the 5' end of the genome. It is not clear if both polymerase and RNase H activities are simultaneous. RNase H probably can proceed both in a polymerase-dependent (RNA cut into small fragments by the same RT performing DNA synthesis) and a polymerase-independent mode (cleavage of remaining RNA fragments by free RTs). Secondly, RT performs DNA-directed plus-strand DNA synthesis using the PPT that has not been removed by RNase H as primers. PPT and tRNA primers are then removed by RNase H. The 3' and 5' ssDNA PBS regions hybridize to form a circular dsDNA intermediate. Strand displacement synthesis by RT to the PBS and PPT ends produces a blunt ended, linear dsDNA copy of the viral genome that includes long terminal repeats (LTRs) at both ends. Functionally, catalyzes viral DNA integration into the host chromosome, by performing a series of DNA cutting and joining reactions. The chain is Gag-Pol polyprotein (pol) from Ovis aries (Sheep).